A 64-amino-acid polypeptide reads, in one-letter code: Bubble protein (64 aa).

Cystine bridges form between Cys3/Cys30, Cys18/Cys38, Cys28/Cys54, and Cys49/Cys64.

It is found in the secreted. Functionally, may act as a toxin. May recognize a molecule or part of a molecule with a negatively charged surface potential. This chain is Bubble protein, found in Penicillium brevicompactum.